The primary structure comprises 476 residues: Protein transport protein Sec61 subunit alpha isoform 1 (476 aa).

The Cytoplasmic portion of the chain corresponds to 1–33 (MGIKFLEVIKPFCVILPEIQKPERKIQFKEKVL). A helical membrane pass occupies residues 34 to 53 (WTAITLFIFLVCCQIPLFGI). Residues 54–76 (MSSDSADPFYWMRVILASNRGTL) are Lumenal-facing. The chain crosses the membrane as a helical span at residues 77 to 96 (MELGISPIVTSGLIMQLLAG). Residues 97 to 117 (AKIIEVGDTPKDRALFNGAQK) lie on the Cytoplasmic side of the membrane. Residues 118–138 (LFGMTITIGQSIVYVMTGMYG) form a helical membrane-spanning segment. Topologically, residues 139-144 (DPSEMG) are lumenal. The helical transmembrane segment at 145–165 (AGVCLLITIQLFVAGLIVLLL) threads the bilayer. The Cytoplasmic segment spans residues 166-172 (DELLQKG). The chain crosses the membrane as a helical span at residues 173–193 (YGLGSGISLFIATNICETIVW). The Lumenal portion of the chain corresponds to 194 to 240 (KAFSPTTVNTGRGMEFEGAIIALFHLLATRTDKVRALREAFYRQNLP). The helical transmembrane segment at 241–261 (NLMNLIATIFVFAVVIYFQGF) threads the bilayer. Residues 262–288 (RVDLPIKSARYRGQYNTYPIKLFYTSN) are Cytoplasmic-facing. The helical transmembrane segment at 289-309 (IPIILQSALVSNLYVISQMLS) threads the bilayer. Residues 310-354 (ARFSGNLLVSLLGTWSDTSSGGPARAYPVGGLCYYLSPPESFGSV) lie on the Lumenal side of the membrane. The helical transmembrane segment at 355–375 (LEDPVHAVVYIVFMLGSCAFF) threads the bilayer. The Cytoplasmic segment spans residues 376–420 (SKTWIEVSGSSAKDVAKQLKEQQMVMRGHRETSMVHELNRYIPTA). Residues 421–441 (AAFGGLCIGALSVLADFLGAI) form a helical membrane-spanning segment. The Lumenal portion of the chain corresponds to 442-445 (GSGT). A helical membrane pass occupies residues 446-462 (GILLAVTIIYQYFEIFV). The Cytoplasmic portion of the chain corresponds to 463–476 (KEQSEVGSMGALLF).

Belongs to the SecY/SEC61-alpha family. In terms of assembly, the SEC61 channel-forming translocon complex consists of channel-forming core components SEC61A1, SEC61B and SEC61G and different auxiliary components such as SEC62 and SEC63. The SEC61 channel associates with the multi-pass translocon (MPT) complex.

The protein resides in the endoplasmic reticulum membrane. Component of SEC61 channel-forming translocon complex that mediates transport of signal peptide-containing precursor polypeptides across the endoplasmic reticulum (ER). Forms a ribosome receptor and a gated pore in the ER membrane, both functions required for cotranslational translocation of nascent polypeptides. May cooperate with auxiliary protein SEC62, SEC63 and HSPA5/BiP to enable post-translational transport of small presecretory proteins. The SEC61 channel is also involved in ER membrane insertion of transmembrane proteins: it mediates membrane insertion of the first few transmembrane segments of proteins, while insertion of subsequent transmembrane regions of multi-pass membrane proteins is mediated by the multi-pass translocon (MPT) complex. The SEC61 channel cooperates with the translocating protein TRAM1 to import nascent proteins into the ER. Controls the passive efflux of calcium ions from the ER lumen to the cytosol through SEC61 channel, contributing to the maintenance of cellular calcium homeostasis. Plays a critical role in nephrogenesis, specifically at pronephros stage. This chain is Protein transport protein Sec61 subunit alpha isoform 1 (SEC61A1), found in Bos taurus (Bovine).